The primary structure comprises 453 residues: Glutamyl-tRNA(Gln) amidotransferase subunit A (453 aa).

Catalysis depends on charge relay system residues K56 and S131. The active-site Acyl-ester intermediate is S155.

This sequence belongs to the amidase family. GatA subfamily. In terms of assembly, heterotrimer of A, B and C subunits.

It catalyses the reaction L-glutamyl-tRNA(Gln) + L-glutamine + ATP + H2O = L-glutaminyl-tRNA(Gln) + L-glutamate + ADP + phosphate + H(+). Functionally, allows the formation of correctly charged Gln-tRNA(Gln) through the transamidation of misacylated Glu-tRNA(Gln) in organisms which lack glutaminyl-tRNA synthetase. The reaction takes place in the presence of glutamine and ATP through an activated gamma-phospho-Glu-tRNA(Gln). The sequence is that of Glutamyl-tRNA(Gln) amidotransferase subunit A from Campylobacter jejuni subsp. jejuni serotype O:6 (strain 81116 / NCTC 11828).